A 286-amino-acid polypeptide reads, in one-letter code: 33 kDa chaperonin (286 aa).

Cystine bridges form between C225–C227 and C258–C261.

Belongs to the HSP33 family. Under oxidizing conditions two disulfide bonds are formed involving the reactive cysteines. Under reducing conditions zinc is bound to the reactive cysteines and the protein is inactive.

It is found in the cytoplasm. Functionally, redox regulated molecular chaperone. Protects both thermally unfolding and oxidatively damaged proteins from irreversible aggregation. Plays an important role in the bacterial defense system toward oxidative stress. The protein is 33 kDa chaperonin of Shewanella sp. (strain ANA-3).